The primary structure comprises 429 residues: Histidinol dehydrogenase (429 aa).

NAD(+)-binding residues include Y127, Q188, and N211. Substrate-binding residues include S234, Q256, and H259. Zn(2+) is bound by residues Q256 and H259. Active-site proton acceptor residues include E324 and H325. Substrate contacts are provided by H325, D358, E412, and H417. D358 lines the Zn(2+) pocket. A Zn(2+)-binding site is contributed by H417.

Belongs to the histidinol dehydrogenase family. Requires Zn(2+) as cofactor.

It carries out the reaction L-histidinol + 2 NAD(+) + H2O = L-histidine + 2 NADH + 3 H(+). The protein operates within amino-acid biosynthesis; L-histidine biosynthesis; L-histidine from 5-phospho-alpha-D-ribose 1-diphosphate: step 9/9. Catalyzes the sequential NAD-dependent oxidations of L-histidinol to L-histidinaldehyde and then to L-histidine. In Bacillus thuringiensis subsp. konkukian (strain 97-27), this protein is Histidinol dehydrogenase.